Here is a 479-residue protein sequence, read N- to C-terminus: Aspartyl/glutamyl-tRNA(Asn/Gln) amidotransferase subunit B (479 aa).

This sequence belongs to the GatB/GatE family. GatB subfamily. Heterotrimer of A, B and C subunits.

It carries out the reaction L-glutamyl-tRNA(Gln) + L-glutamine + ATP + H2O = L-glutaminyl-tRNA(Gln) + L-glutamate + ADP + phosphate + H(+). The enzyme catalyses L-aspartyl-tRNA(Asn) + L-glutamine + ATP + H2O = L-asparaginyl-tRNA(Asn) + L-glutamate + ADP + phosphate + 2 H(+). Its function is as follows. Allows the formation of correctly charged Asn-tRNA(Asn) or Gln-tRNA(Gln) through the transamidation of misacylated Asp-tRNA(Asn) or Glu-tRNA(Gln) in organisms which lack either or both of asparaginyl-tRNA or glutaminyl-tRNA synthetases. The reaction takes place in the presence of glutamine and ATP through an activated phospho-Asp-tRNA(Asn) or phospho-Glu-tRNA(Gln). This Alcanivorax borkumensis (strain ATCC 700651 / DSM 11573 / NCIMB 13689 / SK2) protein is Aspartyl/glutamyl-tRNA(Asn/Gln) amidotransferase subunit B.